Reading from the N-terminus, the 222-residue chain is tRNA (guanine-N(1)-)-methyltransferase (222 aa).

S-adenosyl-L-methionine contacts are provided by residues glycine 111 and 131–136 (LGNYVI).

The protein belongs to the RNA methyltransferase TrmD family. In terms of assembly, homodimer.

It is found in the cytoplasm. It catalyses the reaction guanosine(37) in tRNA + S-adenosyl-L-methionine = N(1)-methylguanosine(37) in tRNA + S-adenosyl-L-homocysteine + H(+). Specifically methylates guanosine-37 in various tRNAs. This Leptospira borgpetersenii serovar Hardjo-bovis (strain JB197) protein is tRNA (guanine-N(1)-)-methyltransferase.